An 85-amino-acid chain; its full sequence is Exodeoxyribonuclease 7 small subunit (85 aa).

Belongs to the XseB family. As to quaternary structure, heterooligomer composed of large and small subunits.

The protein localises to the cytoplasm. The enzyme catalyses Exonucleolytic cleavage in either 5'- to 3'- or 3'- to 5'-direction to yield nucleoside 5'-phosphates.. Its function is as follows. Bidirectionally degrades single-stranded DNA into large acid-insoluble oligonucleotides, which are then degraded further into small acid-soluble oligonucleotides. In Alkalilimnicola ehrlichii (strain ATCC BAA-1101 / DSM 17681 / MLHE-1), this protein is Exodeoxyribonuclease 7 small subunit.